The sequence spans 252 residues: MSNTSASFGFKDVDASLKAGLVRGVFDRVAKNYDIMNDLMSGGVHRLWKDAVAARLNPQPGEVIIDCAGGTGDMARRFAKMARKAQERRGGPDATINIVDYNAEMIMAGIERGGEPEITWTVGDAQRLPLPDAYADAYVISFGIRNVTDINAALREARRVLKPGGRFLCLEFSRPVTEPLAKAYDAYSFKVIPQVGEWVAKDRDAYQYLVESIRRFPDQRTFAGMIEAAGFKRVTFTNFTGGVAALHQGWAI.

S-adenosyl-L-methionine is bound by residues threonine 71, aspartate 100, 124–125 (DA), and serine 141.

This sequence belongs to the class I-like SAM-binding methyltransferase superfamily. MenG/UbiE family.

The catalysed reaction is a 2-demethylmenaquinol + S-adenosyl-L-methionine = a menaquinol + S-adenosyl-L-homocysteine + H(+). It catalyses the reaction a 2-methoxy-6-(all-trans-polyprenyl)benzene-1,4-diol + S-adenosyl-L-methionine = a 5-methoxy-2-methyl-3-(all-trans-polyprenyl)benzene-1,4-diol + S-adenosyl-L-homocysteine + H(+). Its pathway is quinol/quinone metabolism; menaquinone biosynthesis; menaquinol from 1,4-dihydroxy-2-naphthoate: step 2/2. The protein operates within cofactor biosynthesis; ubiquinone biosynthesis. Its function is as follows. Methyltransferase required for the conversion of demethylmenaquinol (DMKH2) to menaquinol (MKH2) and the conversion of 2-polyprenyl-6-methoxy-1,4-benzoquinol (DDMQH2) to 2-polyprenyl-3-methyl-6-methoxy-1,4-benzoquinol (DMQH2). In Caulobacter vibrioides (strain ATCC 19089 / CIP 103742 / CB 15) (Caulobacter crescentus), this protein is Ubiquinone/menaquinone biosynthesis C-methyltransferase UbiE.